A 396-amino-acid polypeptide reads, in one-letter code: Acetate kinase (396 aa).

N7 is a Mg(2+) binding site. K14 is a binding site for ATP. R88 provides a ligand contact to substrate. D145 (proton donor/acceptor) is an active-site residue. Residues 203–207 (HAGNG), 278–280 (DAR), and 326–330 (GIGEN) each bind ATP. Mg(2+) is bound at residue E379.

Belongs to the acetokinase family. In terms of assembly, homodimer. Mg(2+) serves as cofactor. Mn(2+) is required as a cofactor.

The protein localises to the cytoplasm. The catalysed reaction is acetate + ATP = acetyl phosphate + ADP. It functions in the pathway metabolic intermediate biosynthesis; acetyl-CoA biosynthesis; acetyl-CoA from acetate: step 1/2. Functionally, catalyzes the formation of acetyl phosphate from acetate and ATP. Can also catalyze the reverse reaction. This chain is Acetate kinase, found in Phytoplasma australiense.